The sequence spans 542 residues: Chaperonin GroEL (542 aa).

ATP is bound by residues 29-32 (TLGP), 86-90 (DGTTT), Gly-413, 476-478 (NAA), and Asp-492. The interval 523 to 542 (EPAAPAMPGGMDPSMMGGMM) is disordered. Residues 526-542 (APAMPGGMDPSMMGGMM) show a composition bias toward low complexity.

This sequence belongs to the chaperonin (HSP60) family. In terms of assembly, forms a cylinder of 14 subunits composed of two heptameric rings stacked back-to-back. Interacts with the co-chaperonin GroES.

The protein localises to the cytoplasm. It catalyses the reaction ATP + H2O + a folded polypeptide = ADP + phosphate + an unfolded polypeptide.. Its function is as follows. Together with its co-chaperonin GroES, plays an essential role in assisting protein folding. The GroEL-GroES system forms a nano-cage that allows encapsulation of the non-native substrate proteins and provides a physical environment optimized to promote and accelerate protein folding. The protein is Chaperonin GroEL of Streptococcus uberis (strain ATCC BAA-854 / 0140J).